A 247-amino-acid chain; its full sequence is MKKLVLLRHGESQWNRENRFTGWVDVDLSEKGREEARTAGQLLKDEGFVFDLAYTSVLKRAIRTLWTVLDEMNLMWIPVTKNWRLNERHYGALQGLNKAETAQRHGDEQVLIWRRSYDTPPPALTESDEFWPGKDPRYASLSSQELPATECLKDTVARFLPYWHETIAPQIRDGKNVIITAHGNSLRALVKYLDNISDEDIVGLNIPTGIPLVYELDDDLKPLKSYYLGDQEELKKKVEVVVKQGKA.

Substrate is bound by residues 8–15, 21–22, R60, 87–90, K98, 114–115, and 183–184; these read RHGESQWN, TG, ERHY, RR, and GN. H9 (tele-phosphohistidine intermediate) is an active-site residue. E87 (proton donor/acceptor) is an active-site residue.

This sequence belongs to the phosphoglycerate mutase family. BPG-dependent PGAM subfamily.

The enzyme catalyses (2R)-2-phosphoglycerate = (2R)-3-phosphoglycerate. The protein operates within carbohydrate degradation; glycolysis; pyruvate from D-glyceraldehyde 3-phosphate: step 3/5. In terms of biological role, catalyzes the interconversion of 2-phosphoglycerate and 3-phosphoglycerate. The protein is 2,3-bisphosphoglycerate-dependent phosphoglycerate mutase of Chlorobaculum tepidum (strain ATCC 49652 / DSM 12025 / NBRC 103806 / TLS) (Chlorobium tepidum).